The following is a 498-amino-acid chain: UPF0371 protein cauri_2449 (498 aa).

It belongs to the UPF0371 family.

In Corynebacterium aurimucosum (strain ATCC 700975 / DSM 44827 / CIP 107346 / CN-1) (Corynebacterium nigricans), this protein is UPF0371 protein cauri_2449.